A 419-amino-acid chain; its full sequence is UDP-N-acetylglucosamine 1-carboxyvinyltransferase (419 aa).

Position 22 to 23 (22 to 23 (KN)) interacts with phosphoenolpyruvate. R92 provides a ligand contact to UDP-N-acetyl-alpha-D-glucosamine. The active-site Proton donor is the C116. C116 carries the 2-(S-cysteinyl)pyruvic acid O-phosphothioketal modification. UDP-N-acetyl-alpha-D-glucosamine is bound by residues D307 and V329.

Belongs to the EPSP synthase family. MurA subfamily.

The protein resides in the cytoplasm. It catalyses the reaction phosphoenolpyruvate + UDP-N-acetyl-alpha-D-glucosamine = UDP-N-acetyl-3-O-(1-carboxyvinyl)-alpha-D-glucosamine + phosphate. It participates in cell wall biogenesis; peptidoglycan biosynthesis. Cell wall formation. Adds enolpyruvyl to UDP-N-acetylglucosamine. This is UDP-N-acetylglucosamine 1-carboxyvinyltransferase from Pseudothermotoga lettingae (strain ATCC BAA-301 / DSM 14385 / NBRC 107922 / TMO) (Thermotoga lettingae).